The following is a 196-amino-acid chain: Golgi to ER traffic protein 1 (196 aa).

The Lumenal segment spans residues 1–10 (MFLDLHPYTI). The helical transmembrane segment at 11–30 (LVSIFIILLVKQIVGRIGKS) threads the bilayer. Residues 31-114 (TIQEFVWLLY…SIDKLANVLL (84 aa)) are Cytoplasmic-facing. The stretch at 76-114 (AKWTKLNRQADKLTSEIQKLNEEIRQSKASIDKLANVLL) forms a coiled coil. Residues 115-135 (MVLTTLPIWVARIFFRKTHLF) form a helical membrane-spanning segment. Over 136-159 (YLRSGIFPRYIEWVLALPFFPSGA) the chain is Lumenal. A helical transmembrane segment spans residues 160-176 (VGLTVWMFAANSVIHNV). Over 177–196 (ISLVSFAFEKRVEKPVRQKK) the chain is Cytoplasmic.

Belongs to the WRB/GET1 family. As to quaternary structure, component of the Golgi to ER traffic (GET) complex, which is composed of GET1, GET2 and GET3. Within the complex, GET1 and GET2 form a heterotetramer which is stabilized by phosphatidylinositol binding and which binds to the GET3 homodimer.

It is found in the endoplasmic reticulum membrane. Its subcellular location is the golgi apparatus membrane. Its function is as follows. Required for the post-translational delivery of tail-anchored (TA) proteins to the endoplasmic reticulum. Together with GET2, acts as a membrane receptor for soluble GET3, which recognizes and selectively binds the transmembrane domain of TA proteins in the cytosol. The GET complex cooperates with the HDEL receptor ERD2 to mediate the ATP-dependent retrieval of resident ER proteins that contain a C-terminal H-D-E-L retention signal from the Golgi to the ER. This chain is Golgi to ER traffic protein 1, found in Candida tropicalis (strain ATCC MYA-3404 / T1) (Yeast).